A 237-amino-acid polypeptide reads, in one-letter code: Leucyl/phenylalanyl-tRNA--protein transferase (237 aa).

The protein belongs to the L/F-transferase family.

Its subcellular location is the cytoplasm. It carries out the reaction N-terminal L-lysyl-[protein] + L-leucyl-tRNA(Leu) = N-terminal L-leucyl-L-lysyl-[protein] + tRNA(Leu) + H(+). The catalysed reaction is N-terminal L-arginyl-[protein] + L-leucyl-tRNA(Leu) = N-terminal L-leucyl-L-arginyl-[protein] + tRNA(Leu) + H(+). The enzyme catalyses L-phenylalanyl-tRNA(Phe) + an N-terminal L-alpha-aminoacyl-[protein] = an N-terminal L-phenylalanyl-L-alpha-aminoacyl-[protein] + tRNA(Phe). In terms of biological role, functions in the N-end rule pathway of protein degradation where it conjugates Leu, Phe and, less efficiently, Met from aminoacyl-tRNAs to the N-termini of proteins containing an N-terminal arginine or lysine. The chain is Leucyl/phenylalanyl-tRNA--protein transferase from Shewanella baltica (strain OS195).